Reading from the N-terminus, the 1414-residue chain is DNA-directed RNA polymerase subunit beta' (1414 aa).

Residues C70, C72, C85, and C88 each coordinate Zn(2+). Residues D460, D462, and D464 each coordinate Mg(2+). Residues C815, C889, C896, and C899 each contribute to the Zn(2+) site. Positions 1395–1414 (EAEAQFADVSSTPDSDTDAS) are disordered.

It belongs to the RNA polymerase beta' chain family. As to quaternary structure, the RNAP catalytic core consists of 2 alpha, 1 beta, 1 beta' and 1 omega subunit. When a sigma factor is associated with the core the holoenzyme is formed, which can initiate transcription. Requires Mg(2+) as cofactor. Zn(2+) serves as cofactor.

The enzyme catalyses RNA(n) + a ribonucleoside 5'-triphosphate = RNA(n+1) + diphosphate. In terms of biological role, DNA-dependent RNA polymerase catalyzes the transcription of DNA into RNA using the four ribonucleoside triphosphates as substrates. The sequence is that of DNA-directed RNA polymerase subunit beta' from Janthinobacterium sp. (strain Marseille) (Minibacterium massiliensis).